The chain runs to 282 residues: AB hydrolase superfamily protein FGSG_00045 (282 aa).

Polar residues predominate over residues 1–10; it reads MAPISSTRPS. The disordered stretch occupies residues 1–22; it reads MAPISSTRPSHSIAADNPNPTT. The AB hydrolase-1 domain occupies 22–270; sequence TQVNFNTNMT…FADMVKRWII (249 aa).

Belongs to the AB hydrolase superfamily.

It participates in mycotoxin biosynthesis. In terms of biological role, AB hydrolase superfamily protein; part of the gene cluster that mediates the biosynthesis of gramillins A and B, bicyclic lipopeptides that induce cell death in maize leaves but not in wheat leaves. The nonribosomal peptide synthetase GRA1 incorporates respectively a glutamic adic (Glu), a leucine (Leu), a serine (Ser), a hydroxyglutamine (HOGln), a 2-amino decanoic acid, and 2 cysteins (CysB and CysA). The biosynthesis of 2-amino decanoic acid incorporated in gramillins could be initiated by a fatty acid synthase composed of the alpha and beta subunits FGSG_00036 and FGSG_11656. The cytochrome P450 monooxygenase FGSG_15680 could hydroxylate the fatty acid chain. Subsequent oxidation to the ketone by the oxidoreductase FGSG_00048 and transamination by aminotransferase FGSG_00049 could form 2-amino-decanoic acid. On the other hand, FGSG_15680 could also be responsible for the HO-modified glutamine at the gamma-position. Whether hydroxylation occurs on the fully assembled product or on the Gln residue prior to assembly into the gramillins requires further proof. The thioredoxin FGSG_00043 could also be required for the disulfide-bond formation between CysA and CysB. The specific involvement of the remaining proteins from the cluster is more difficult to discern, but could have broader regulatory (FGSG_00040 and FGSG_11657) or enzymatic functions (FGSG_00044 and FGSG_00045). The final C-domain of GRA1 does not possess the expected sequence of a termination CT domain, often implicated in macrocyclization and release of a cyclopeptidein fungal NRPs; and the thioesterase FGSG_00047 may act in concert with the terminal C-domain of GRA1 to catalyze the formation of the macrocyclic anhydride and release of the products. This is AB hydrolase superfamily protein FGSG_00045 from Gibberella zeae (strain ATCC MYA-4620 / CBS 123657 / FGSC 9075 / NRRL 31084 / PH-1) (Wheat head blight fungus).